We begin with the raw amino-acid sequence, 537 residues long: MVTRRHLLASASLSATLAALGITPEALAASRVKLGNAAPFNFDALIERARAMAGQPYTPPATAPADILAKIDYEAHGKIKFDTAHALFADGPGQFPVTFFHLGTFFRAPVRMHVVDKGEAREIVYDESYFDMPADSPARKLPRNSGFAGFRFQESRLGDQKKLDWKKNDWVAFLGASYFRAIGELYQYGLSARGIALDVAQAGRAEEFPNFTHVWFDTPSNEHADSVTIYALLDGPGITGAYRFVMHRGKGVVMEIDTALFLRRDIDRFGIAPASSMYWFSETAKGTATDWRPEVHDSDGLAMWTGSGERIWRPLNDPPRVMTSAFSDNNPRGFGLLQRDRDFNNYMDGVHYERRPSLWVEPLEGWGEGAVQLVEIPTDDEIHDNIVAMWVPKAPARAGSHYRLRYRLHWLADEPYPTPLARCVATRLGNGGQPGQPRPRGVRKFMVEFKGGPLEKVPFGVKPEAVLTSSRGTFSYVFTEAVPNGVPGHWRAQFDLTVDGKEPVDMRLFLRLDGKPLSETWLYQYHPFQSPVGPVAS.

Residues 1-28 (MVTRRHLLASASLSATLAALGITPEALA) constitute a signal peptide (tat-type signal).

It belongs to the OpgD/OpgG family. In terms of processing, predicted to be exported by the Tat system. The position of the signal peptide cleavage has not been experimentally proven.

The protein localises to the periplasm. The protein operates within glycan metabolism; osmoregulated periplasmic glucan (OPG) biosynthesis. Functionally, probably involved in the control of the structural glucose backbone of osmoregulated periplasmic glucans (OPGs). In Ralstonia nicotianae (strain ATCC BAA-1114 / GMI1000) (Ralstonia solanacearum), this protein is Glucans biosynthesis protein D 2 (opgD2).